Reading from the N-terminus, the 291-residue chain is Elongation factor Ts (291 aa).

The tract at residues 79 to 82 (TDFV) is involved in Mg(2+) ion dislocation from EF-Tu.

The protein belongs to the EF-Ts family.

Its subcellular location is the cytoplasm. Functionally, associates with the EF-Tu.GDP complex and induces the exchange of GDP to GTP. It remains bound to the aminoacyl-tRNA.EF-Tu.GTP complex up to the GTP hydrolysis stage on the ribosome. The chain is Elongation factor Ts from Roseobacter denitrificans (strain ATCC 33942 / OCh 114) (Erythrobacter sp. (strain OCh 114)).